We begin with the raw amino-acid sequence, 276 residues long: 2-hydroxy-6-oxo-2,4-heptadienoate hydrolase (276 aa).

Positions 28–259 (NPVVLVHGSG…GRCGHWVQIE (232 aa)) constitute an AB hydrolase-1 domain. Active-site residues include Ser105, Asp226, and His254.

Belongs to the DmpD/TodF/XylF esterase family.

The catalysed reaction is (2Z,4E)-2-hydroxy-6-oxohepta-2,4-dienoate + H2O = (2Z)-2-hydroxypenta-2,4-dienoate + acetate + H(+). It participates in xenobiotic degradation; toluene degradation. Functionally, catalyzes the hydrolysis of 2-hydroxy-6-oxohepta-2,4-dienoate into 2-hydroxypenta-2,4-dienoate and acetate. The sequence is that of 2-hydroxy-6-oxo-2,4-heptadienoate hydrolase (todF) from Pseudomonas putida (strain ATCC 700007 / DSM 6899 / JCM 31910 / BCRC 17059 / LMG 24140 / F1).